We begin with the raw amino-acid sequence, 64 residues long: Large ribosomal subunit protein bL35 (64 aa).

It belongs to the bacterial ribosomal protein bL35 family.

The sequence is that of Large ribosomal subunit protein bL35 from Ectopseudomonas mendocina (strain ymp) (Pseudomonas mendocina).